Reading from the N-terminus, the 340-residue chain is S-adenosylmethionine:tRNA ribosyltransferase-isomerase (340 aa).

It belongs to the QueA family. In terms of assembly, monomer.

It localises to the cytoplasm. The catalysed reaction is 7-aminomethyl-7-carbaguanosine(34) in tRNA + S-adenosyl-L-methionine = epoxyqueuosine(34) in tRNA + adenine + L-methionine + 2 H(+). Its pathway is tRNA modification; tRNA-queuosine biosynthesis. Transfers and isomerizes the ribose moiety from AdoMet to the 7-aminomethyl group of 7-deazaguanine (preQ1-tRNA) to give epoxyqueuosine (oQ-tRNA). In Chromobacterium violaceum (strain ATCC 12472 / DSM 30191 / JCM 1249 / CCUG 213 / NBRC 12614 / NCIMB 9131 / NCTC 9757 / MK), this protein is S-adenosylmethionine:tRNA ribosyltransferase-isomerase.